Consider the following 386-residue polypeptide: Succinate--CoA ligase [ADP-forming] subunit beta (386 aa).

Positions 9 to 244 constitute an ATP-grasp domain; it reads KEILRKYGVP…HDEEDPLETR (236 aa). ATP contacts are provided by residues Lys-46, 53–55, Glu-99, Cys-102, and Glu-107; that span reads GRG. The Mg(2+) site is built by Asn-199 and Asp-213. Residues Asn-264 and 321–323 contribute to the substrate site; that span reads GIM.

This sequence belongs to the succinate/malate CoA ligase beta subunit family. As to quaternary structure, heterotetramer of two alpha and two beta subunits. It depends on Mg(2+) as a cofactor.

It carries out the reaction succinate + ATP + CoA = succinyl-CoA + ADP + phosphate. The catalysed reaction is GTP + succinate + CoA = succinyl-CoA + GDP + phosphate. It functions in the pathway carbohydrate metabolism; tricarboxylic acid cycle; succinate from succinyl-CoA (ligase route): step 1/1. Functionally, succinyl-CoA synthetase functions in the citric acid cycle (TCA), coupling the hydrolysis of succinyl-CoA to the synthesis of either ATP or GTP and thus represents the only step of substrate-level phosphorylation in the TCA. The beta subunit provides nucleotide specificity of the enzyme and binds the substrate succinate, while the binding sites for coenzyme A and phosphate are found in the alpha subunit. The chain is Succinate--CoA ligase [ADP-forming] subunit beta from Rickettsia conorii (strain ATCC VR-613 / Malish 7).